Reading from the N-terminus, the 310-residue chain is Tagatose-6-phosphate kinase (310 aa).

The protein belongs to the carbohydrate kinase PfkB family. LacC subfamily.

It carries out the reaction D-tagatofuranose 6-phosphate + ATP = D-tagatofuranose 1,6-bisphosphate + ADP + H(+). It participates in carbohydrate metabolism; D-tagatose 6-phosphate degradation; D-glyceraldehyde 3-phosphate and glycerone phosphate from D-tagatose 6-phosphate: step 1/2. The protein is Tagatose-6-phosphate kinase of Lactococcus lactis subsp. lactis (Streptococcus lactis).